The following is a 194-amino-acid chain: 4'-phosphooxetanocin A phosphatase (194 aa).

4'-phosphooxetanocin A-binding residues include Arg16 and Trp17. Residue Trp17 participates in oxetanocin A binding. 3 residues coordinate Mg(2+): His31, His66, and Asp67. Residues His75, Ser78, and Lys81 each contribute to the 4'-phosphooxetanocin A site. Oxetanocin A is bound by residues His75 and Ser78. Asp132 provides a ligand contact to Mg(2+).

This sequence belongs to the 5DNU family. As to quaternary structure, homodimer. Mg(2+) is required as a cofactor. Requires Co(2+) as cofactor. Mn(2+) serves as cofactor.

It carries out the reaction 4'-phosphooxetanocin A + H2O = oxetanocin A + phosphate. In terms of biological role, phosphohydrolase involved in the biosynthesis of oxetanocin A (OXT-A), a nucleoside analog with antitumor, antiviral and antibacterial properties. Catalyzes the hydrolysis of phosphooxetanocin A (OXT-A-P) to generate oxetanocin A (OXT-A) and a molecule of inorganic phosphate. Can also bind and hydrolyze OXT triphosphate (OXT-A-PPP) and OXT diphosphate (OXT-A-PP), and thus catalyze the sequential hydrolysis of tri-, di- and mono-phosphorylated oxetanocin A compounds, releasing one molecule of inorganic phosphate at a time. In vitro can also use dATP, dAMP and dADP. The sequence is that of 4'-phosphooxetanocin A phosphatase from Priestia megaterium (Bacillus megaterium).